The primary structure comprises 457 residues: Protein OS-9 homolog (457 aa).

The signal sequence occupies residues 1–22 (MIFLPVTSVVFAISWIYSGVSA). Asparagine 47 and asparagine 71 each carry an N-linked (GlcNAc...) asparagine glycan. In terms of domain architecture, MRH spans 104 to 222 (NPIEMNTVPI…RLFLPQLCEL (119 aa)). Tryptophan 116 contacts a mannooligosaccharide derivative. 2 N-linked (GlcNAc...) asparagine glycosylation sites follow: asparagine 142 and asparagine 147. 2 disulfide bridges follow: cysteine 174–cysteine 208 and cysteine 189–cysteine 220. Residues aspartate 175, arginine 181, glutamate 204, and tyrosine 210 each contribute to the a mannooligosaccharide derivative site. N-linked (GlcNAc...) asparagine glycosylation occurs at asparagine 389.

The protein belongs to the OS-9 family. As to quaternary structure, interacts with missfolded ER lumenal proteins.

The protein localises to the endoplasmic reticulum membrane. Lectin involved in the quality control of the secretory pathway. As a member of the endoplasmic reticulum-associated degradation lumenal (ERAD-L) surveillance system, targets misfolded endoplasmic reticulum lumenal glycoproteins for degradation. This chain is Protein OS-9 homolog (YOS9), found in Kluyveromyces lactis (strain ATCC 8585 / CBS 2359 / DSM 70799 / NBRC 1267 / NRRL Y-1140 / WM37) (Yeast).